We begin with the raw amino-acid sequence, 141 residues long: Large ribosomal subunit protein bL17 (141 aa).

Belongs to the bacterial ribosomal protein bL17 family. In terms of assembly, part of the 50S ribosomal subunit. Contacts protein L32.

The sequence is that of Large ribosomal subunit protein bL17 from Chlamydia trachomatis serovar D (strain ATCC VR-885 / DSM 19411 / UW-3/Cx).